The sequence spans 252 residues: Imidazole glycerol phosphate synthase subunit HisF (252 aa).

Active-site residues include Asp-11 and Asp-130.

Belongs to the HisA/HisF family. In terms of assembly, heterodimer of HisH and HisF.

It localises to the cytoplasm. It catalyses the reaction 5-[(5-phospho-1-deoxy-D-ribulos-1-ylimino)methylamino]-1-(5-phospho-beta-D-ribosyl)imidazole-4-carboxamide + L-glutamine = D-erythro-1-(imidazol-4-yl)glycerol 3-phosphate + 5-amino-1-(5-phospho-beta-D-ribosyl)imidazole-4-carboxamide + L-glutamate + H(+). It functions in the pathway amino-acid biosynthesis; L-histidine biosynthesis; L-histidine from 5-phospho-alpha-D-ribose 1-diphosphate: step 5/9. IGPS catalyzes the conversion of PRFAR and glutamine to IGP, AICAR and glutamate. The HisF subunit catalyzes the cyclization activity that produces IGP and AICAR from PRFAR using the ammonia provided by the HisH subunit. The chain is Imidazole glycerol phosphate synthase subunit HisF from Acinetobacter baylyi (strain ATCC 33305 / BD413 / ADP1).